A 178-amino-acid polypeptide reads, in one-letter code: Cytochrome b6-f complex iron-sulfur subunit (178 aa).

Residues 20–42 (LLTFGSVTGVALGALYPVVNYFI) form a helical membrane-spanning segment. In terms of domain architecture, Rieske spans 65–161 (ATGWLSSHPE…VSVENDNVFV (97 aa)). Positions 107, 109, 125, and 128 each coordinate [2Fe-2S] cluster. A disulfide bond links Cys-112 and Cys-127.

This sequence belongs to the Rieske iron-sulfur protein family. As to quaternary structure, the 4 large subunits of the cytochrome b6-f complex are cytochrome b6, subunit IV (17 kDa polypeptide, PetD), cytochrome f and the Rieske protein, while the 4 small subunits are PetG, PetL, PetM and PetN. The complex functions as a dimer. [2Fe-2S] cluster serves as cofactor.

The protein resides in the cellular thylakoid membrane. The enzyme catalyses 2 oxidized [plastocyanin] + a plastoquinol + 2 H(+)(in) = 2 reduced [plastocyanin] + a plastoquinone + 4 H(+)(out). Component of the cytochrome b6-f complex, which mediates electron transfer between photosystem II (PSII) and photosystem I (PSI), cyclic electron flow around PSI, and state transitions. In Parasynechococcus marenigrum (strain WH8102), this protein is Cytochrome b6-f complex iron-sulfur subunit.